A 381-amino-acid polypeptide reads, in one-letter code: Homoserine O-succinyltransferase (381 aa).

Residues Ile53 to Leu361 enclose the AB hydrolase-1 domain. The active-site Nucleophile is the Ser157. A substrate-binding site is contributed by Arg227. Catalysis depends on residues Asp324 and His357. A substrate-binding site is contributed by Asp358.

Belongs to the AB hydrolase superfamily. MetX family. Homodimer.

It localises to the cytoplasm. It carries out the reaction L-homoserine + succinyl-CoA = O-succinyl-L-homoserine + CoA. The protein operates within amino-acid biosynthesis; L-methionine biosynthesis via de novo pathway; O-succinyl-L-homoserine from L-homoserine: step 1/1. In terms of biological role, transfers a succinyl group from succinyl-CoA to L-homoserine, forming succinyl-L-homoserine. The sequence is that of Homoserine O-succinyltransferase from Saccharophagus degradans (strain 2-40 / ATCC 43961 / DSM 17024).